A 490-amino-acid chain; its full sequence is Cytochrome P450 2C28 (490 aa).

Ser-127 is subject to Phosphoserine. Residues Lys-249 and Lys-375 each carry the N6-acetyllysine modification. Residue Cys-435 participates in heme binding.

It belongs to the cytochrome P450 family. Heme is required as a cofactor. In terms of tissue distribution, liver.

The protein resides in the endoplasmic reticulum membrane. It localises to the microsome membrane. It carries out the reaction an organic molecule + reduced [NADPH--hemoprotein reductase] + O2 = an alcohol + oxidized [NADPH--hemoprotein reductase] + H2O + H(+). Its function is as follows. Catalyzes the N-demethylation of aminopyrine and benzphetamine, but does not catalyze the hydroxylation of tolbutamide, testosterone, and progesterone. This Mesocricetus auratus (Golden hamster) protein is Cytochrome P450 2C28 (CYP2C28).